The sequence spans 290 residues: Acetyl-coenzyme A carboxylase carboxyl transferase subunit beta (290 aa).

In terms of domain architecture, CoA carboxyltransferase N-terminal spans 29-290 (LWGKCPECSQ…RLHGYREKRK (262 aa)). Residues cysteine 33, cysteine 36, cysteine 52, and cysteine 55 each contribute to the Zn(2+) site. The segment at 33–55 (CPECSQVVYRKDLLENANVCSNC) adopts a C4-type zinc-finger fold.

This sequence belongs to the AccD/PCCB family. In terms of assembly, acetyl-CoA carboxylase is a heterohexamer composed of biotin carboxyl carrier protein (AccB), biotin carboxylase (AccC) and two subunits each of ACCase subunit alpha (AccA) and ACCase subunit beta (AccD). Zn(2+) is required as a cofactor.

The protein localises to the cytoplasm. It catalyses the reaction N(6)-carboxybiotinyl-L-lysyl-[protein] + acetyl-CoA = N(6)-biotinyl-L-lysyl-[protein] + malonyl-CoA. Its pathway is lipid metabolism; malonyl-CoA biosynthesis; malonyl-CoA from acetyl-CoA: step 1/1. Functionally, component of the acetyl coenzyme A carboxylase (ACC) complex. Biotin carboxylase (BC) catalyzes the carboxylation of biotin on its carrier protein (BCCP) and then the CO(2) group is transferred by the transcarboxylase to acetyl-CoA to form malonyl-CoA. The chain is Acetyl-coenzyme A carboxylase carboxyl transferase subunit beta from Prochlorococcus marinus (strain MIT 9211).